A 203-amino-acid chain; its full sequence is NADH-quinone oxidoreductase subunit C (203 aa).

It belongs to the complex I 30 kDa subunit family. NDH-1 is composed of 14 different subunits. Subunits NuoB, C, D, E, F, and G constitute the peripheral sector of the complex.

It is found in the cell inner membrane. The catalysed reaction is a quinone + NADH + 5 H(+)(in) = a quinol + NAD(+) + 4 H(+)(out). In terms of biological role, NDH-1 shuttles electrons from NADH, via FMN and iron-sulfur (Fe-S) centers, to quinones in the respiratory chain. The immediate electron acceptor for the enzyme in this species is believed to be ubiquinone. Couples the redox reaction to proton translocation (for every two electrons transferred, four hydrogen ions are translocated across the cytoplasmic membrane), and thus conserves the redox energy in a proton gradient. The sequence is that of NADH-quinone oxidoreductase subunit C from Bartonella tribocorum (strain CIP 105476 / IBS 506).